A 428-amino-acid polypeptide reads, in one-letter code: Probable G-protein coupled receptor (428 aa).

At Met-1 to Asp-46 the chain is on the extracellular side. An N-linked (GlcNAc...) asparagine glycan is attached at Asn-18. The chain crosses the membrane as a helical span at residues Leu-47–Val-67. Residues Met-68–Cys-93 lie on the Cytoplasmic side of the membrane. The chain crosses the membrane as a helical span at residues Ala-94–Phe-114. Topologically, residues Thr-115–Gln-120 are extracellular. A helical membrane pass occupies residues Val-121 to Ser-141. Over Val-142 to Leu-162 the chain is Cytoplasmic. Residues Val-163–Phe-183 form a helical membrane-spanning segment. Residues Gly-184 to Gly-210 are Extracellular-facing. Residues Val-211 to Val-231 form a helical membrane-spanning segment. Residues Tyr-232–Ala-293 lie on the Cytoplasmic side of the membrane. A helical transmembrane segment spans residues Ala-294–Phe-314. Residues His-315 to Ala-428 lie on the Extracellular side of the membrane. The segment covering Ser-398–Asn-414 has biased composition (polar residues). Positions Ser-398–Ala-428 are disordered.

It belongs to the G-protein coupled receptor 1 family.

The protein localises to the cell membrane. The polypeptide is Probable G-protein coupled receptor (Oryzias latipes (Japanese rice fish)).